The sequence spans 142 residues: Large ribosomal subunit protein uL11 (142 aa).

Belongs to the universal ribosomal protein uL11 family. In terms of assembly, part of the ribosomal stalk of the 50S ribosomal subunit. Interacts with L10 and the large rRNA to form the base of the stalk. L10 forms an elongated spine to which L12 dimers bind in a sequential fashion forming a multimeric L10(L12)X complex. In terms of processing, one or more lysine residues are methylated.

Its function is as follows. Forms part of the ribosomal stalk which helps the ribosome interact with GTP-bound translation factors. The chain is Large ribosomal subunit protein uL11 from Shewanella sp. (strain ANA-3).